The chain runs to 360 residues: Type II methyltransferase M2.ScrFI (360 aa).

In terms of domain architecture, SAM-dependent MTase C5-type spans 2 to 360; it reads LRVFEAFAGY…SLFKELFKSQ (359 aa). The active site involves Cys-127.

Belongs to the class I-like SAM-binding methyltransferase superfamily. C5-methyltransferase family.

It catalyses the reaction a 2'-deoxycytidine in DNA + S-adenosyl-L-methionine = a 5-methyl-2'-deoxycytidine in DNA + S-adenosyl-L-homocysteine + H(+). A methylase, recognizes the double-stranded sequence 5'-CCNGG-3', methylates C-2 on both strands, and protects the DNA from cleavage by the ScrFI endonuclease. The polypeptide is Type II methyltransferase M2.ScrFI (scrFIBM) (Lactococcus lactis subsp. cremoris (Streptococcus cremoris)).